Here is a 166-residue protein sequence, read N- to C-terminus: Small ribosomal subunit protein uS5 (166 aa).

One can recognise an S5 DRBM domain in the interval 12–75 (YIEKLVQVNR…EAARRNMIQV (64 aa)).

It belongs to the universal ribosomal protein uS5 family. In terms of assembly, part of the 30S ribosomal subunit. Contacts proteins S4 and S8.

In terms of biological role, with S4 and S12 plays an important role in translational accuracy. Its function is as follows. Located at the back of the 30S subunit body where it stabilizes the conformation of the head with respect to the body. The chain is Small ribosomal subunit protein uS5 from Azotobacter vinelandii (strain DJ / ATCC BAA-1303).